The chain runs to 418 residues: MTIFEELKARGLVFQTTDEEALKKSLDDGQVSFYTGYDPTADSLHLGHLVPILVMRHLQLAGHKPYALVGGATGLIGDPSFKDDERSLQTKETVKNWVQSIRSQLERFIDFKHGDNKAQMVNNYDWMGKITFIDFLRDVGKYFTVNYMMSKESVKKRIETGISYTEFAYQIMQGYDFYVLNQEHAVTLQVGGSDQWGNMTAGTELIRRKANKTAHVITVPLITDATGKKFGKSEGNAVWLDADKTSPYEMYQFWLNVMDADAIRFLKIFTFLSLDEIEDIRVKFEAAPHERLAQKILAKEVVTFVHGQTAYQEAVKITEQLFAGHIKSLSAKELKQGLSNVPNYAVKSNDNHNIVELLVTAGIVNSKRQAREDLQNGAIYINGERIQDLTYNLSQQDKIDNELTVIRRGKKKYFVLTY.

Tyr34 provides a ligand contact to L-tyrosine. The short motif at 39–48 is the 'HIGH' region element; that stretch reads PTADSLHLGH. L-tyrosine-binding residues include Tyr169 and Gln173. The short motif at 229–233 is the 'KMSKS' region element; sequence KFGKS. Lys232 contacts ATP. The S4 RNA-binding domain maps to 352 to 418; it reads HNIVELLVTA…GKKKYFVLTY (67 aa).

This sequence belongs to the class-I aminoacyl-tRNA synthetase family. TyrS type 1 subfamily. As to quaternary structure, homodimer.

The protein resides in the cytoplasm. The catalysed reaction is tRNA(Tyr) + L-tyrosine + ATP = L-tyrosyl-tRNA(Tyr) + AMP + diphosphate + H(+). Functionally, catalyzes the attachment of tyrosine to tRNA(Tyr) in a two-step reaction: tyrosine is first activated by ATP to form Tyr-AMP and then transferred to the acceptor end of tRNA(Tyr). The polypeptide is Tyrosine--tRNA ligase (Streptococcus mutans serotype c (strain ATCC 700610 / UA159)).